Here is a 264-residue protein sequence, read N- to C-terminus: Phosphonoacetaldehyde hydrolase (264 aa).

Aspartate 9 serves as the catalytic Nucleophile. Mg(2+) contacts are provided by aspartate 9 and alanine 11. Lysine 50 (schiff-base intermediate with substrate) is an active-site residue. Aspartate 183 contributes to the Mg(2+) binding site.

The protein belongs to the HAD-like hydrolase superfamily. PhnX family. As to quaternary structure, homodimer. The cofactor is Mg(2+).

The enzyme catalyses phosphonoacetaldehyde + H2O = acetaldehyde + phosphate + H(+). Functionally, involved in phosphonate degradation. This chain is Phosphonoacetaldehyde hydrolase, found in Bacillus cereus (strain G9842).